The primary structure comprises 135 residues: Basic phospholipase A2 6 (135 aa).

7 disulfides stabilise this stretch: Cys-28–Cys-87, Cys-42–Cys-134, Cys-44–Cys-60, Cys-59–Cys-115, Cys-66–Cys-108, Cys-76–Cys-101, and Cys-94–Cys-106. Ca(2+) contacts are provided by Tyr-43, Gly-45, and Gly-47. Residue His-63 is part of the active site. Asp-64 serves as a coordination point for Ca(2+). Asp-109 is an active-site residue.

The protein belongs to the phospholipase A2 family. Group I subfamily. D49 sub-subfamily. Requires Ca(2+) as cofactor. As to expression, expressed by the venom gland.

It localises to the secreted. It carries out the reaction a 1,2-diacyl-sn-glycero-3-phosphocholine + H2O = a 1-acyl-sn-glycero-3-phosphocholine + a fatty acid + H(+). Its function is as follows. Snake venom phospholipase A2 (PLA2) that inhibits neuromuscular transmission by blocking acetylcholine release from the nerve termini. PLA2 catalyzes the calcium-dependent hydrolysis of the 2-acyl groups in 3-sn-phosphoglycerides. Very weakly suppress the acetylcholine (ACh)-evoked current mediated by alpha-7-similar nAChRs in L.stagnalis neurons. The protein is Basic phospholipase A2 6 of Bungarus fasciatus (Banded krait).